The sequence spans 488 residues: 3-octaprenyl-4-hydroxybenzoate carboxy-lyase (488 aa).

N172 is a binding site for Mn(2+). Prenylated FMN is bound by residues I175–R177, R189–L191, and R194–G195. E238 lines the Mn(2+) pocket. The active-site Proton donor is D287.

This sequence belongs to the UbiD family. In terms of assembly, homohexamer. Prenylated FMN is required as a cofactor. It depends on Mn(2+) as a cofactor.

The protein resides in the cell membrane. The enzyme catalyses a 4-hydroxy-3-(all-trans-polyprenyl)benzoate + H(+) = a 2-(all-trans-polyprenyl)phenol + CO2. The protein operates within cofactor biosynthesis; ubiquinone biosynthesis. Catalyzes the decarboxylation of 3-octaprenyl-4-hydroxy benzoate to 2-octaprenylphenol, an intermediate step in ubiquinone biosynthesis. The chain is 3-octaprenyl-4-hydroxybenzoate carboxy-lyase from Alteromonas mediterranea (strain DSM 17117 / CIP 110805 / LMG 28347 / Deep ecotype).